Reading from the N-terminus, the 545-residue chain is Chaperonin GroEL 5 (545 aa).

Residues 30–33 (TLGP), lysine 51, 87–91 (DGTTT), glycine 415, and aspartate 495 contribute to the ATP site.

It belongs to the chaperonin (HSP60) family. As to quaternary structure, forms a cylinder of 14 subunits composed of two heptameric rings stacked back-to-back. Interacts with the co-chaperonin GroES.

It is found in the cytoplasm. The catalysed reaction is ATP + H2O + a folded polypeptide = ADP + phosphate + an unfolded polypeptide.. In terms of biological role, together with its co-chaperonin GroES, plays an essential role in assisting protein folding. The GroEL-GroES system forms a nano-cage that allows encapsulation of the non-native substrate proteins and provides a physical environment optimized to promote and accelerate protein folding. The chain is Chaperonin GroEL 5 from Sinorhizobium medicae (strain WSM419) (Ensifer medicae).